Here is a 323-residue protein sequence, read N- to C-terminus: MVSSQIESEEKSLRIIFMGTPDFASSNLRALLAGPDQVVAVVTQPDRPKGRGKKLTSPPVKVIAEEAGLPVLQPTKVRTDEFLEALAAYAPDLIVVTAYGRILPKPILDLAPLGCINVHGSLLPKYRGAAPIQWAVIQGDDEVGVTTMQMDEGMDTGDILLRKIIIPSPDETAGTLFDKLAELGTSALLETIEGLKKGTIRAEAQDHAQATEAPMLSKNDGLIDWSRTATELESLIRGMDPWPSAFCFLEGKRLRLFMPEVSYQKTDAQPGAVLRAGRDGLLIATGKNCLLVKEIQPEGKKRMTVEAFLCGAKIGAETVLKTT.

Residue 121 to 124 (SLLP) participates in (6S)-5,6,7,8-tetrahydrofolate binding.

This sequence belongs to the Fmt family.

It carries out the reaction L-methionyl-tRNA(fMet) + (6R)-10-formyltetrahydrofolate = N-formyl-L-methionyl-tRNA(fMet) + (6S)-5,6,7,8-tetrahydrofolate + H(+). In terms of biological role, attaches a formyl group to the free amino group of methionyl-tRNA(fMet). The formyl group appears to play a dual role in the initiator identity of N-formylmethionyl-tRNA by promoting its recognition by IF2 and preventing the misappropriation of this tRNA by the elongation apparatus. The polypeptide is Methionyl-tRNA formyltransferase (Desulfotalea psychrophila (strain LSv54 / DSM 12343)).